We begin with the raw amino-acid sequence, 88 residues long: ATP synthase F(0) complex subunit f, mitochondrial (88 aa).

The residue at position 2 (Ala-2) is an N-acetylalanine. Residue Ser-3 is modified to Phosphoserine. Lys-16 carries the post-translational modification N6-acetyllysine. The helical transmembrane segment at 62–79 (MVLAAYVVFSYCISYKEL) threads the bilayer.

It belongs to the ATPase F chain family. As to quaternary structure, component of the ATP synthase complex composed at least of ATP5F1A/subunit alpha, ATP5F1B/subunit beta, ATP5MC1/subunit c (homooctomer), MT-ATP6/subunit a, MT-ATP8/subunit 8, ATP5ME/subunit e, ATP5MF/subunit f, ATP5MG/subunit g, ATP5MK/subunit k, ATP5MJ/subunit j, ATP5F1C/subunit gamma, ATP5F1D/subunit delta, ATP5F1E/subunit epsilon, ATP5PF/subunit F6, ATP5PB/subunit b, ATP5PD/subunit d, ATP5PO/subunit OSCP. ATP synthase complex consists of a soluble F(1) head domain (subunits alpha(3) and beta(3)) - the catalytic core - and a membrane F(0) domain - the membrane proton channel (subunits c, a, 8, e, f, g, k and j). These two domains are linked by a central stalk (subunits gamma, delta, and epsilon) rotating inside the F1 region and a stationary peripheral stalk (subunits F6, b, d, and OSCP).

The protein resides in the mitochondrion. It is found in the mitochondrion inner membrane. Functionally, subunit f, of the mitochondrial membrane ATP synthase complex (F(1)F(0) ATP synthase or Complex V) that produces ATP from ADP in the presence of a proton gradient across the membrane which is generated by electron transport complexes of the respiratory chain. ATP synthase complex consist of a soluble F(1) head domain - the catalytic core - and a membrane F(1) domain - the membrane proton channel. These two domains are linked by a central stalk rotating inside the F(1) region and a stationary peripheral stalk. During catalysis, ATP synthesis in the catalytic domain of F(1) is coupled via a rotary mechanism of the central stalk subunits to proton translocation. In vivo, can only synthesize ATP although its ATP hydrolase activity can be activated artificially in vitro. Part of the complex F(0) domain. This Rattus norvegicus (Rat) protein is ATP synthase F(0) complex subunit f, mitochondrial.